The primary structure comprises 426 residues: Cell cycle checkpoint control protein RAD9B (426 aa).

Residue serine 359 is modified to Phosphoserine.

Belongs to the rad9 family. In terms of assembly, interacts with HUS1, HUS1B, RAD1, RAD9A and RAD17. Expressed in testis and skeletal muscle.

The protein is Cell cycle checkpoint control protein RAD9B (RAD9B) of Homo sapiens (Human).